A 152-amino-acid polypeptide reads, in one-letter code: Deoxyuridine 5'-triphosphate nucleotidohydrolase (152 aa).

Substrate contacts are provided by residues 71–73 (RSG), asparagine 84, 88–90 (LID), and methionine 98.

The protein belongs to the dUTPase family. Requires Mg(2+) as cofactor.

The enzyme catalyses dUTP + H2O = dUMP + diphosphate + H(+). It participates in pyrimidine metabolism; dUMP biosynthesis; dUMP from dCTP (dUTP route): step 2/2. Its function is as follows. This enzyme is involved in nucleotide metabolism: it produces dUMP, the immediate precursor of thymidine nucleotides and it decreases the intracellular concentration of dUTP so that uracil cannot be incorporated into DNA. The polypeptide is Deoxyuridine 5'-triphosphate nucleotidohydrolase (Shewanella putrefaciens (strain CN-32 / ATCC BAA-453)).